A 416-amino-acid polypeptide reads, in one-letter code: Nucleoside transporter 1 (416 aa).

Residues 1–26 (MSISKESSKTMIDIEKKGGEGKDGKG) show a composition bias toward basic and acidic residues. Positions 1 to 28 (MSISKESSKTMIDIEKKGGEGKDGKGGS) are disordered. Topologically, residues 1-35 (MSISKESSKTMIDIEKKGGEGKDGKGGSKMTKNEQ) are cytoplasmic. Residues 36–58 (FLLPFTFILIGLSSLNVWNTALG) traverse the membrane as a helical segment. Topologically, residues 59–64 (LNINFK) are extracellular. The chain crosses the membrane as a helical span at residues 65 to 83 (YNTFQITGLVCSSIIALFV). Topologically, residues 84-87 (KVPK) are cytoplasmic. The helical transmembrane segment at 88–107 (MLLPFALGGLAMLCAGFQIA) threads the bilayer. The Extracellular segment spans residues 108-119 (HQCFTFEQFDTY). Residues 120–139 (CLIAFIVIGIMAGLAQTIAF) traverse the membrane as a helical segment. Residues 140-148 (SVGTTMEEN) lie on the Cytoplasmic side of the membrane. The helical transmembrane segment at 149 to 171 (MGGYMSAGIGISGVFIFIINLLL) threads the bilayer. Topologically, residues 172-187 (DQIVPDQKKFNVNEAK) are extracellular. Residues 188-210 (LLYLFLICELCLVLAIIFSVCNL) form a helical membrane-spanning segment. The Cytoplasmic segment spans residues 211–241 (ELSSSKTSKEEEYSDKEQGLSYLELLKDSYK). Residues 242 to 261 (AILAMFLVNWLSLQLFPGVG) traverse the membrane as a helical segment. The Extracellular segment spans residues 262–273 (HKKWQESHNISD). Residues 274 to 292 (YNVTLIVGMFQVFDFVSRY) traverse the membrane as a helical segment. Residues 293–311 (PPNLSHMKIFKWFTFSLNK) lie on the Cytoplasmic side of the membrane. The chain crosses the membrane as a helical span at residues 312 to 331 (LLLLNFLRLLFIPWFVINAA). Topologically, residues 332 to 343 (CDLPIFTNIVQQ) are extracellular. Residues 344-366 (CVCMAMLAFTNGWFNTVPFLVFV) traverse the membrane as a helical segment. The Cytoplasmic portion of the chain corresponds to 367-380 (QELKKAKKKKDIET). A helical transmembrane segment spans residues 381–403 (ISTFLVVAMFVGLFMGIWTTYIY). Topologically, residues 404-416 (DFFPIVIKRYVVP) are extracellular.

This sequence belongs to the SLC29A/ENT transporter (TC 2.A.57) family.

The protein resides in the cell membrane. The enzyme catalyses inosine(in) = inosine(out). It carries out the reaction adenosine(in) = adenosine(out). It catalyses the reaction hypoxanthine(out) = hypoxanthine(in). The catalysed reaction is guanosine(in) = guanosine(out). The enzyme catalyses guanine(out) = guanine(in). It carries out the reaction thymidine(in) = thymidine(out). It catalyses the reaction uridine(out) = uridine(in). The catalysed reaction is uracil(in) = uracil(out). The enzyme catalyses thymine(out) = thymine(in). It carries out the reaction adenine(out) = adenine(in). It catalyses the reaction cytosine(out) = cytosine(in). The catalysed reaction is xanthine(out) = xanthine(in). Functionally, nucleoside and nucleobase transporter with a broad substrate specificity. This is Nucleoside transporter 1 from Plasmodium vivax (strain Salvador I).